The primary structure comprises 426 residues: Torsin-4A (426 aa).

The interval 41 to 60 is disordered; it reads QPGTEPDSGTGTLGPTGSLG. The span at 48 to 60 shows a compositional bias: low complexity; that stretch reads SGTGTLGPTGSLG. Phosphoserine is present on residues serine 58 and serine 76. Phosphothreonine is present on threonine 84. Residue serine 101 is modified to Phosphoserine. A helical membrane pass occupies residues 117–133; that stretch reads CLLLLVAIVGFQVLNAI. 189–196 contributes to the ATP binding site; it reads GPSGVGKS.

The protein belongs to the ClpA/ClpB family. Torsin subfamily.

Its subcellular location is the membrane. The sequence is that of Torsin-4A (Tor4a) from Mus musculus (Mouse).